We begin with the raw amino-acid sequence, 211 residues long: Probable nicotinate-nucleotide adenylyltransferase (211 aa).

It belongs to the NadD family.

The enzyme catalyses nicotinate beta-D-ribonucleotide + ATP + H(+) = deamido-NAD(+) + diphosphate. It participates in cofactor biosynthesis; NAD(+) biosynthesis; deamido-NAD(+) from nicotinate D-ribonucleotide: step 1/1. Catalyzes the reversible adenylation of nicotinate mononucleotide (NaMN) to nicotinic acid adenine dinucleotide (NaAD). The protein is Probable nicotinate-nucleotide adenylyltransferase of Gemmatimonas aurantiaca (strain DSM 14586 / JCM 11422 / NBRC 100505 / T-27).